The chain runs to 230 residues: 2,3-bisphosphoglycerate-dependent phosphoglycerate mutase (230 aa).

Residues 8-15 (RHGESEWN), 21-22 (TG), R60, 87-90 (ERHY), K98, 114-115 (RR), and 183-184 (GN) contribute to the substrate site. H9 (tele-phosphohistidine intermediate) is an active-site residue. The active-site Proton donor/acceptor is E87.

This sequence belongs to the phosphoglycerate mutase family. BPG-dependent PGAM subfamily.

The catalysed reaction is (2R)-2-phosphoglycerate = (2R)-3-phosphoglycerate. It functions in the pathway carbohydrate degradation; glycolysis; pyruvate from D-glyceraldehyde 3-phosphate: step 3/5. Functionally, catalyzes the interconversion of 2-phosphoglycerate and 3-phosphoglycerate. In Streptococcus agalactiae serotype Ia (strain ATCC 27591 / A909 / CDC SS700), this protein is 2,3-bisphosphoglycerate-dependent phosphoglycerate mutase.